A 396-amino-acid chain; its full sequence is S100P-binding protein (396 aa).

The disordered stretch occupies residues 145–249 (CDPVLDKDKI…RKNSGSHKSG (105 aa)). Composition is skewed to basic and acidic residues over residues 148 to 161 (VLDK…KETE) and 168 to 185 (EQTR…RCTE). Composition is skewed to polar residues over residues 202 to 215 (SSPS…TASD) and 227 to 246 (VFSQ…SGSH).

In terms of assembly, interacts with S100P.

The protein resides in the nucleus. The sequence is that of S100P-binding protein from Mus musculus (Mouse).